The chain runs to 538 residues: Putative cysteine ligase BshC (538 aa).

Residues 460–484 (KINEQIELLERMLKRNVEKKHEVEL) are a coiled coil.

Belongs to the BshC family.

Functionally, involved in bacillithiol (BSH) biosynthesis. May catalyze the last step of the pathway, the addition of cysteine to glucosamine malate (GlcN-Mal) to generate BSH. The chain is Putative cysteine ligase BshC from Bacillus cereus (strain AH820).